A 310-amino-acid chain; its full sequence is Putative S-adenosyl-L-methionine-dependent methyltransferase Mvan_1346 (310 aa).

Residues D136 and 165–166 (DL) each bind S-adenosyl-L-methionine.

The protein belongs to the UPF0677 family.

Exhibits S-adenosyl-L-methionine-dependent methyltransferase activity. The chain is Putative S-adenosyl-L-methionine-dependent methyltransferase Mvan_1346 from Mycolicibacterium vanbaalenii (strain DSM 7251 / JCM 13017 / BCRC 16820 / KCTC 9966 / NRRL B-24157 / PYR-1) (Mycobacterium vanbaalenii).